The following is a 235-amino-acid chain: Small ribosomal subunit protein mS23 (235 aa).

Residues proline 51 to asparagine 71 form a disordered region.

It belongs to the mitochondrion-specific ribosomal protein mS23 family. Component of the mitochondrial small ribosomal subunit.

It is found in the mitochondrion. The protein is Small ribosomal subunit protein mS23 (RSM25) of Chaetomium globosum (strain ATCC 6205 / CBS 148.51 / DSM 1962 / NBRC 6347 / NRRL 1970) (Soil fungus).